We begin with the raw amino-acid sequence, 116 residues long: Large ribosomal subunit protein bL17 (116 aa).

This sequence belongs to the bacterial ribosomal protein bL17 family. As to quaternary structure, part of the 50S ribosomal subunit. Contacts protein L32.

In Acaryochloris marina (strain MBIC 11017), this protein is Large ribosomal subunit protein bL17.